A 253-amino-acid chain; its full sequence is uncharacterized protein (253 aa).

Residues 200-209 (TGREHAHKGP) are compositionally biased toward basic and acidic residues. Disordered regions lie at residues 200–225 (TGREHAHKGPELTTPDSGLPRPPNPA) and 234–253 (QHSPPLGTSTPSAVLLSAAT).

In terms of tissue distribution, most abundantly expressed in gastrointestinal tissues. Expressed at lower levels in kidney and placenta. Expressed in fetal brain, liver, placenta, kidney and lung.

This is an uncharacterized protein from Homo sapiens (Human).